The primary structure comprises 191 residues: NAD(P)H-dependent FMN reductase LOT6 (191 aa).

FMN contacts are provided by residues arginine 11, 94-97 (QYNW), and tyrosine 124.

Homodimer.

Its subcellular location is the cytoplasm. It localises to the nucleus. The catalysed reaction is FMNH2 + NADP(+) = FMN + NADPH + 2 H(+). It carries out the reaction FMNH2 + NAD(+) = FMN + NADH + 2 H(+). Functionally, has several reductase activities that are NAD(P)H-dependent and involve FMN as a cofactor, ferricyanide being the best substrate for reduction. May be involved in ferric iron assimilation. The sequence is that of NAD(P)H-dependent FMN reductase LOT6 (LOT6) from Saccharomyces cerevisiae (strain ATCC 204508 / S288c) (Baker's yeast).